Reading from the N-terminus, the 131-residue chain is Jacalin-related lectin 15 (131 aa).

Positions 1-126 (MSTPSGSNPL…LTSLGAYFAP (126 aa)) constitute a Jacalin-type lectin domain.

It belongs to the jacalin lectin family. In terms of tissue distribution, expressed in the vascular and surrounding tissues in cotyledons. Detected in root apical meristems.

The sequence is that of Jacalin-related lectin 15 (JAL15) from Arabidopsis thaliana (Mouse-ear cress).